Consider the following 118-residue polypeptide: Large ribosomal subunit protein uL22 (118 aa).

Belongs to the universal ribosomal protein uL22 family. In terms of assembly, part of the 50S ribosomal subunit.

Its function is as follows. This protein binds specifically to 23S rRNA; its binding is stimulated by other ribosomal proteins, e.g. L4, L17, and L20. It is important during the early stages of 50S assembly. It makes multiple contacts with different domains of the 23S rRNA in the assembled 50S subunit and ribosome. Functionally, the globular domain of the protein is located near the polypeptide exit tunnel on the outside of the subunit, while an extended beta-hairpin is found that lines the wall of the exit tunnel in the center of the 70S ribosome. The protein is Large ribosomal subunit protein uL22 of Leuconostoc mesenteroides subsp. mesenteroides (strain ATCC 8293 / DSM 20343 / BCRC 11652 / CCM 1803 / JCM 6124 / NCDO 523 / NBRC 100496 / NCIMB 8023 / NCTC 12954 / NRRL B-1118 / 37Y).